The following is a 457-amino-acid chain: Bifunctional protein GlmU (457 aa).

Positions 1–229 (MYNCAIILAA…YEEIMGVNSR (229 aa)) are pyrophosphorylase. Residues 8-11 (LAAG), Lys-22, Gln-73, and 78-79 (GT) contribute to the UDP-N-acetyl-alpha-D-glucosamine site. Asp-103 is a binding site for Mg(2+). UDP-N-acetyl-alpha-D-glucosamine contacts are provided by Gly-140, Glu-155, Asn-170, and Asn-227. Asn-227 is a Mg(2+) binding site. Residues 230–250 (VQLSEAEIVMRKRINHKHMVN) form a linker region. An N-acetyltransferase region spans residues 251–457 (GVTFIDCEST…WLDKKGLLKK (207 aa)). UDP-N-acetyl-alpha-D-glucosamine-binding residues include Arg-332 and Lys-350. Catalysis depends on His-362, which acts as the Proton acceptor. Positions 365 and 376 each coordinate UDP-N-acetyl-alpha-D-glucosamine. Acetyl-CoA is bound by residues 385 to 386 (NY), Ala-422, and Arg-439.

This sequence in the N-terminal section; belongs to the N-acetylglucosamine-1-phosphate uridyltransferase family. The protein in the C-terminal section; belongs to the transferase hexapeptide repeat family. In terms of assembly, homotrimer. Requires Mg(2+) as cofactor.

The protein resides in the cytoplasm. It carries out the reaction alpha-D-glucosamine 1-phosphate + acetyl-CoA = N-acetyl-alpha-D-glucosamine 1-phosphate + CoA + H(+). The catalysed reaction is N-acetyl-alpha-D-glucosamine 1-phosphate + UTP + H(+) = UDP-N-acetyl-alpha-D-glucosamine + diphosphate. Its pathway is nucleotide-sugar biosynthesis; UDP-N-acetyl-alpha-D-glucosamine biosynthesis; N-acetyl-alpha-D-glucosamine 1-phosphate from alpha-D-glucosamine 6-phosphate (route II): step 2/2. The protein operates within nucleotide-sugar biosynthesis; UDP-N-acetyl-alpha-D-glucosamine biosynthesis; UDP-N-acetyl-alpha-D-glucosamine from N-acetyl-alpha-D-glucosamine 1-phosphate: step 1/1. It participates in bacterial outer membrane biogenesis; LPS lipid A biosynthesis. Its function is as follows. Catalyzes the last two sequential reactions in the de novo biosynthetic pathway for UDP-N-acetylglucosamine (UDP-GlcNAc). The C-terminal domain catalyzes the transfer of acetyl group from acetyl coenzyme A to glucosamine-1-phosphate (GlcN-1-P) to produce N-acetylglucosamine-1-phosphate (GlcNAc-1-P), which is converted into UDP-GlcNAc by the transfer of uridine 5-monophosphate (from uridine 5-triphosphate), a reaction catalyzed by the N-terminal domain. This is Bifunctional protein GlmU from Clostridium botulinum (strain Langeland / NCTC 10281 / Type F).